Here is an 83-residue protein sequence, read N- to C-terminus: Cell division topological specificity factor (83 aa).

It belongs to the MinE family.

Prevents the cell division inhibition by proteins MinC and MinD at internal division sites while permitting inhibition at polar sites. This ensures cell division at the proper site by restricting the formation of a division septum at the midpoint of the long axis of the cell. In Buchnera aphidicola subsp. Baizongia pistaciae (strain Bp), this protein is Cell division topological specificity factor.